The following is a 1243-amino-acid chain: Multifunctional 2-oxoglutarate metabolism enzyme (1243 aa).

The interval 1-40 (MNSPSPFGQNEWLVEEMYRKFREDPSSVDPSWHEFLVDYS) is 2-oxoglutarate dehydrogenase E1, N-terminal part. Basic and acidic residues predominate over residues 22-36 (REDPSSVDPSWHEFL). The disordered stretch occupies residues 22-118 (REDPSSVDPS…AAPAGVSDDD (97 aa)). The linker stretch occupies residues 41 to 103 (PEPTNDAPAG…KKPEEKTSPA (63 aa)). Residues 47–58 (APAGNGKPAAAP) show a composition bias toward low complexity. Residues 59-71 (TAPPEPASAPAPK) show a composition bias toward pro residues. Residues 91–100 (APEKKPEEKT) are compositionally biased toward basic and acidic residues. Low complexity predominate over residues 101–112 (SPAPKAKTAAPA). The segment at 104 to 353 (PKAKTAAPAG…LRTIHTLLLD (250 aa)) is succinyltransferase E2. His-332 acts as the Proton acceptor; for succinyltransferase activity in catalysis. The 2-oxoglutarate dehydrogenase E1, C-terminal part stretch occupies residues 354–1243 (DEFYDEIFRE…QQEIIDEAFG (890 aa)). Arg-558 contributes to the thiamine diphosphate binding site. 2-oxoglutarate is bound by residues His-597 and Ser-622. 6 residues coordinate thiamine diphosphate: Ser-622, Leu-624, Asp-661, Ala-662, Ala-663, and Asn-694. Residue Asp-661 coordinates Mg(2+). Residues Asn-694 and Ile-696 each contribute to the Mg(2+) site. Residues 799 to 831 (DISMKEAEDALRDYQGQLERVFNEVRELEKHAI) adopt a coiled-coil conformation. A 2-oxoglutarate-binding site is contributed by His-1036. Acetyl-CoA is bound by residues Thr-1054, Arg-1070, Lys-1105, Ser-1108, Gln-1158, Arg-1165, and Arg-1166.

This sequence belongs to the 2-oxoacid dehydrogenase family. Kgd subfamily. Homodimer. The 2-oxoglutarate dehydrogenase (ODH) complex contains multiple copies of three enzymatic components: 2-oxoglutarate dehydrogenase (E1), dihydrolipoamide succinyltransferase (E2) and lipoamide dehydrogenase (E3). Mg(2+) serves as cofactor. Thiamine diphosphate is required as a cofactor.

It carries out the reaction glyoxylate + 2-oxoglutarate + H(+) = 2-hydroxy-3-oxoadipate + CO2. It catalyses the reaction 2-oxoglutarate + H(+) = succinate semialdehyde + CO2. The catalysed reaction is N(6)-[(R)-lipoyl]-L-lysyl-[protein] + 2-oxoglutarate + H(+) = N(6)-[(R)-S(8)-succinyldihydrolipoyl]-L-lysyl-[protein] + CO2. The enzyme catalyses N(6)-[(R)-dihydrolipoyl]-L-lysyl-[protein] + succinyl-CoA = N(6)-[(R)-S(8)-succinyldihydrolipoyl]-L-lysyl-[protein] + CoA. It functions in the pathway carbohydrate metabolism; tricarboxylic acid cycle; succinate from 2-oxoglutarate (transferase route): step 1/2. The protein operates within carbohydrate metabolism; tricarboxylic acid cycle; succinyl-CoA from 2-oxoglutarate (dehydrogenase route): step 1/1. Its activity is regulated as follows. Alpha-ketoglutarate dehydrogenase and decarboxylase activities are inhibited by unphosphorylated GarA, and allosterically activated by acetyl-CoA, the main substrate of the TCA cycle. Its function is as follows. Shows three enzymatic activities that share a first common step, the attack of thiamine-PP on 2-oxoglutarate (alpha-ketoglutarate, KG), leading to the formation of an enamine-thiamine-PP intermediate upon decarboxylation. Thus, displays KGD activity, catalyzing the decarboxylation from five-carbon 2-oxoglutarate to four-carbon succinate semialdehyde (SSA). Also catalyzes C-C bond formation between the activated aldehyde formed after decarboxylation of alpha-ketoglutarate and the carbonyl of glyoxylate (GLX), to yield 2-hydroxy-3-oxoadipate (HOA), which spontaneously decarboxylates to form 5-hydroxylevulinate (HLA). And is also a component of the 2-oxoglutarate dehydrogenase (ODH) complex, that catalyzes the overall conversion of 2-oxoglutarate to succinyl-CoA and CO(2). The KG decarboxylase and KG dehydrogenase reactions provide two alternative, tightly regulated, pathways connecting the oxidative and reductive branches of the TCA cycle. This is Multifunctional 2-oxoglutarate metabolism enzyme (kgd) from Mycolicibacterium vanbaalenii (strain DSM 7251 / JCM 13017 / BCRC 16820 / KCTC 9966 / NRRL B-24157 / PYR-1) (Mycobacterium vanbaalenii).